The chain runs to 500 residues: L-arabinose isomerase (500 aa).

Mn(2+) is bound by residues glutamate 306, glutamate 333, histidine 350, and histidine 450.

This sequence belongs to the arabinose isomerase family. Homohexamer. Requires Mn(2+) as cofactor.

The enzyme catalyses beta-L-arabinopyranose = L-ribulose. It participates in carbohydrate degradation; L-arabinose degradation via L-ribulose; D-xylulose 5-phosphate from L-arabinose (bacterial route): step 1/3. Its function is as follows. Catalyzes the conversion of L-arabinose to L-ribulose. The protein is L-arabinose isomerase of Escherichia coli (strain 55989 / EAEC).